Consider the following 197-residue polypeptide: Holliday junction branch migration complex subunit RuvA (197 aa).

Positions 1 to 62 are domain I; that stretch reads MIEFVRGEVA…EDQEVLFGFR (62 aa). The tract at residues 63–141 is domain II; sequence SRRERALFTK…ELAPDYIPSE (79 aa). The segment at 141 to 145 is flexible linker; that stretch reads EGLFA. A domain III region spans residues 146-197; that stretch reads QGNAELNEACEALTALGYSEREVEKVKKALQGEVLSTDQYVKRALQLLLNVR.

It belongs to the RuvA family. As to quaternary structure, homotetramer. Forms an RuvA(8)-RuvB(12)-Holliday junction (HJ) complex. HJ DNA is sandwiched between 2 RuvA tetramers; dsDNA enters through RuvA and exits via RuvB. An RuvB hexamer assembles on each DNA strand where it exits the tetramer. Each RuvB hexamer is contacted by two RuvA subunits (via domain III) on 2 adjacent RuvB subunits; this complex drives branch migration. In the full resolvosome a probable DNA-RuvA(4)-RuvB(12)-RuvC(2) complex forms which resolves the HJ.

The protein resides in the cytoplasm. Functionally, the RuvA-RuvB-RuvC complex processes Holliday junction (HJ) DNA during genetic recombination and DNA repair, while the RuvA-RuvB complex plays an important role in the rescue of blocked DNA replication forks via replication fork reversal (RFR). RuvA specifically binds to HJ cruciform DNA, conferring on it an open structure. The RuvB hexamer acts as an ATP-dependent pump, pulling dsDNA into and through the RuvAB complex. HJ branch migration allows RuvC to scan DNA until it finds its consensus sequence, where it cleaves and resolves the cruciform DNA. The polypeptide is Holliday junction branch migration complex subunit RuvA (Exiguobacterium sibiricum (strain DSM 17290 / CCUG 55495 / CIP 109462 / JCM 13490 / 255-15)).